Here is a 379-residue protein sequence, read N- to C-terminus: Cytochrome b (379 aa).

Transmembrane regions (helical) follow at residues 33 to 53, 77 to 98, 113 to 133, and 178 to 198; these read FGSL…FLAM, WLIR…FIHV, WNIG…GYVL, and FFAF…VHLL. 2 residues coordinate heme b: His-83 and His-97. Heme b contacts are provided by His-182 and His-196. His-201 serves as a coordination point for a ubiquinone. The next 4 membrane-spanning stretches (helical) occupy residues 226-246, 288-308, 320-340, and 347-367; these read IKDL…ALFF, LGGV…PLLN, ITQI…WIGG, and FTMI…ILMP.

It belongs to the cytochrome b family. In terms of assembly, the cytochrome bc1 complex contains 11 subunits: 3 respiratory subunits (MT-CYB, CYC1 and UQCRFS1), 2 core proteins (UQCRC1 and UQCRC2) and 6 low-molecular weight proteins (UQCRH/QCR6, UQCRB/QCR7, UQCRQ/QCR8, UQCR10/QCR9, UQCR11/QCR10 and a cleavage product of UQCRFS1). This cytochrome bc1 complex then forms a dimer. Requires heme b as cofactor.

It is found in the mitochondrion inner membrane. Its function is as follows. Component of the ubiquinol-cytochrome c reductase complex (complex III or cytochrome b-c1 complex) that is part of the mitochondrial respiratory chain. The b-c1 complex mediates electron transfer from ubiquinol to cytochrome c. Contributes to the generation of a proton gradient across the mitochondrial membrane that is then used for ATP synthesis. The sequence is that of Cytochrome b (MT-CYB) from Akodon dayi (Day's grass mouse).